The following is a 327-amino-acid chain: Endochitinase CH5B (327 aa).

The first 26 residues, 1–26 (MKKNRMMIMICSVGVVWMLLVGGSYG), serve as a signal peptide directing secretion. The 41-residue stretch at 27–67 (EQCGRQAGGALCPGGNCCSQFGWCGSTTDYCGKDCQSQCGG) folds into the Chitin-binding type-1 domain. 7 disulfides stabilise this stretch: cysteine 29–cysteine 44, cysteine 38–cysteine 50, cysteine 43–cysteine 57, cysteine 61–cysteine 65, cysteine 96–cysteine 158, cysteine 169–cysteine 177, and cysteine 276–cysteine 308. The Proton donor role is filled by glutamate 140. Positions 317-327 (SLFLSDLVTSQ) are cleaved as a propeptide — removed in mature form.

It belongs to the glycosyl hydrolase 19 family. Chitinase class I subfamily.

Its subcellular location is the vacuole. It catalyses the reaction Random endo-hydrolysis of N-acetyl-beta-D-glucosaminide (1-&gt;4)-beta-linkages in chitin and chitodextrins.. Defense against chitin-containing fungal pathogens. The polypeptide is Endochitinase CH5B (Phaseolus vulgaris (Kidney bean)).